Here is a 543-residue protein sequence, read N- to C-terminus: CTP synthase (543 aa).

Residues 1–267 (MTKYVFVTGG…ATQVLNLLNL (267 aa)) are amidoligase domain. Position 13 (S13) interacts with CTP. S13 contacts UTP. Residues 14–19 (SIGKGI) and D71 contribute to the ATP site. Residues D71 and E141 each contribute to the Mg(2+) site. CTP contacts are provided by residues 148–150 (DIE), 188–193 (KTKPTQ), and K224. Residues 188–193 (KTKPTQ) and K224 contribute to the UTP site. Residues 292–534 (EVAIVGKYVR…LAAAAKNSNR (243 aa)) enclose the Glutamine amidotransferase type-1 domain. G354 lines the L-glutamine pocket. C381 (nucleophile; for glutamine hydrolysis) is an active-site residue. L-glutamine contacts are provided by residues 382 to 385 (LGMQ), E405, and R462. Residues H507 and E509 contribute to the active site.

Belongs to the CTP synthase family. As to quaternary structure, homotetramer.

The catalysed reaction is UTP + L-glutamine + ATP + H2O = CTP + L-glutamate + ADP + phosphate + 2 H(+). It carries out the reaction L-glutamine + H2O = L-glutamate + NH4(+). It catalyses the reaction UTP + NH4(+) + ATP = CTP + ADP + phosphate + 2 H(+). It functions in the pathway pyrimidine metabolism; CTP biosynthesis via de novo pathway; CTP from UDP: step 2/2. Its activity is regulated as follows. Allosterically activated by GTP, when glutamine is the substrate; GTP has no effect on the reaction when ammonia is the substrate. The allosteric effector GTP functions by stabilizing the protein conformation that binds the tetrahedral intermediate(s) formed during glutamine hydrolysis. Inhibited by the product CTP, via allosteric rather than competitive inhibition. Functionally, catalyzes the ATP-dependent amination of UTP to CTP with either L-glutamine or ammonia as the source of nitrogen. Regulates intracellular CTP levels through interactions with the four ribonucleotide triphosphates. The polypeptide is CTP synthase (Thermosynechococcus vestitus (strain NIES-2133 / IAM M-273 / BP-1)).